A 180-amino-acid polypeptide reads, in one-letter code: MKIINIIKGVGTQLRSLGMVFSHAWRPRETLSYPDESIYSPPRYRGRIVLTRDPDGDERCVACNLCAVACPVGCISLQKAERDDGRWYPEFFRINFSRCIFCGLCEEACPTTAIQLTPDFEMGEYRRQDLVYEKEDLLISGPGKYPDYNFYRMSGMAIDGKPKGDAEHEAKPIDVKSLLP.

4Fe-4S ferredoxin-type domains lie at 48–80 (IVLTRDPDGDERCVACNLCAVACPVGCISLQKA) and 90–119 (EFFRINFSRCIFCGLCEEACPTTAIQLTPD). The [4Fe-4S] cluster site is built by Cys-60, Cys-63, Cys-66, Cys-70, Cys-99, Cys-102, Cys-105, and Cys-109. A compositionally biased stretch (basic and acidic residues) spans 161 to 174 (KPKGDAEHEAKPID). The segment at 161 to 180 (KPKGDAEHEAKPIDVKSLLP) is disordered.

The protein belongs to the complex I 23 kDa subunit family. In terms of assembly, NDH-1 is composed of 14 different subunits. Subunits NuoA, H, J, K, L, M, N constitute the membrane sector of the complex. It depends on [4Fe-4S] cluster as a cofactor.

The protein resides in the cell inner membrane. The catalysed reaction is a quinone + NADH + 5 H(+)(in) = a quinol + NAD(+) + 4 H(+)(out). Its function is as follows. NDH-1 shuttles electrons from NADH, via FMN and iron-sulfur (Fe-S) centers, to quinones in the respiratory chain. The immediate electron acceptor for the enzyme in this species is believed to be ubiquinone. Couples the redox reaction to proton translocation (for every two electrons transferred, four hydrogen ions are translocated across the cytoplasmic membrane), and thus conserves the redox energy in a proton gradient. The polypeptide is NADH-quinone oxidoreductase subunit I (Aeromonas salmonicida (strain A449)).